The primary structure comprises 587 residues: Transport inhibitor response 1-like protein Os05g0150500 (587 aa).

The F-box domain occupies 6–63; that stretch reads SRAACAAAAPPWHSLPDEVWEHAFSFLPAAADRGAAAGACSSWLRAERRSRRRLAVAN. A 1D-myo-inositol hexakisphosphate-binding site is contributed by K85. The interaction with auxin-responsive proteins stretch occupies residues 92-93; sequence DF. 1D-myo-inositol hexakisphosphate is bound by residues 124–125 and R355; that span reads KR. Residues 358–363 are interaction with auxin-responsive proteins; it reads PSDPFG. Position 409 to 411 (409 to 411) interacts with 1D-myo-inositol hexakisphosphate; sequence CFR. The tract at residues 413 to 417 is interaction with auxin-responsive proteins; sequence CILEP. R444 is a 1D-myo-inositol hexakisphosphate binding site. Positions 472–473 are interaction with auxin-responsive proteins; sequence AF. Residues 492 to 493 and R517 contribute to the 1D-myo-inositol hexakisphosphate site; that span reads KK.

In terms of assembly, part of a SCF (SKP1-cullin-F-box) protein ligase complex. May interact with auxin and auxin-responsive proteins.

Its subcellular location is the nucleus. The protein operates within protein modification; protein ubiquitination. In Oryza sativa subsp. japonica (Rice), this protein is Transport inhibitor response 1-like protein Os05g0150500.